The following is a 215-amino-acid chain: Probable transaldolase (215 aa).

The active-site Schiff-base intermediate with substrate is the Lys-83.

It belongs to the transaldolase family. Type 3B subfamily.

The protein localises to the cytoplasm. It carries out the reaction D-sedoheptulose 7-phosphate + D-glyceraldehyde 3-phosphate = D-erythrose 4-phosphate + beta-D-fructose 6-phosphate. It participates in carbohydrate degradation; pentose phosphate pathway; D-glyceraldehyde 3-phosphate and beta-D-fructose 6-phosphate from D-ribose 5-phosphate and D-xylulose 5-phosphate (non-oxidative stage): step 2/3. Transaldolase is important for the balance of metabolites in the pentose-phosphate pathway. In Methanococcus vannielii (strain ATCC 35089 / DSM 1224 / JCM 13029 / OCM 148 / SB), this protein is Probable transaldolase.